The sequence spans 293 residues: Protease HtpX homolog (293 aa).

2 consecutive transmembrane segments (helical) span residues 4 to 24 (IFLF…TLRV) and 40 to 60 (SLLI…LLIS). Residue histidine 146 participates in Zn(2+) binding. The active site involves glutamate 147. Histidine 150 contacts Zn(2+). 2 consecutive transmembrane segments (helical) span residues 161 to 181 (LIQG…GYFI) and 197 to 217 (FITV…IVAW). Glutamate 223 contributes to the Zn(2+) binding site.

Belongs to the peptidase M48B family. Zn(2+) serves as cofactor.

The protein localises to the cell inner membrane. This is Protease HtpX homolog from Bordetella petrii (strain ATCC BAA-461 / DSM 12804 / CCUG 43448).